The chain runs to 946 residues: Bifunctional glutamine synthetase adenylyltransferase/adenylyl-removing enzyme (946 aa).

Residues 1 to 440 (MKPLSSPLQQ…VFNELIGDDE (440 aa)) form an adenylyl removase region. The segment at 449 to 946 (SEQWRELWQD…ASWQKWLVEE (498 aa)) is adenylyl transferase.

It belongs to the GlnE family. Requires Mg(2+) as cofactor.

The enzyme catalyses [glutamine synthetase]-O(4)-(5'-adenylyl)-L-tyrosine + phosphate = [glutamine synthetase]-L-tyrosine + ADP. It catalyses the reaction [glutamine synthetase]-L-tyrosine + ATP = [glutamine synthetase]-O(4)-(5'-adenylyl)-L-tyrosine + diphosphate. Involved in the regulation of glutamine synthetase GlnA, a key enzyme in the process to assimilate ammonia. When cellular nitrogen levels are high, the C-terminal adenylyl transferase (AT) inactivates GlnA by covalent transfer of an adenylyl group from ATP to specific tyrosine residue of GlnA, thus reducing its activity. Conversely, when nitrogen levels are low, the N-terminal adenylyl removase (AR) activates GlnA by removing the adenylyl group by phosphorolysis, increasing its activity. The regulatory region of GlnE binds the signal transduction protein PII (GlnB) which indicates the nitrogen status of the cell. In Escherichia coli O8 (strain IAI1), this protein is Bifunctional glutamine synthetase adenylyltransferase/adenylyl-removing enzyme.